The chain runs to 421 residues: Phosphoribosylamine--glycine ligase (421 aa).

The ATP-grasp domain maps to 108–314; that stretch reads KEIMVKYNVP…FAQNIDDIMM (207 aa). Residue 134–195 participates in ATP binding; that stretch reads IEEQGAPIVV…EEFLDGEEFS (62 aa). Mg(2+) is bound by residues Glu284 and Asn286.

It belongs to the GARS family. It depends on Mg(2+) as a cofactor. Requires Mn(2+) as cofactor.

It catalyses the reaction 5-phospho-beta-D-ribosylamine + glycine + ATP = N(1)-(5-phospho-beta-D-ribosyl)glycinamide + ADP + phosphate + H(+). It functions in the pathway purine metabolism; IMP biosynthesis via de novo pathway; N(1)-(5-phospho-D-ribosyl)glycinamide from 5-phospho-alpha-D-ribose 1-diphosphate: step 2/2. The protein is Phosphoribosylamine--glycine ligase of Streptococcus pyogenes serotype M18 (strain MGAS8232).